The following is a 339-amino-acid chain: Non-homologous end joining protein Ku (339 aa).

One can recognise a Ku domain in the interval 10–187 (ITFGLVNIPV…LPKATTGKPT (178 aa)). 2 disordered regions span residues 230–251 (DSGK…RQGA) and 263–339 (SLGQ…KHAA). Over residues 267–277 (RGKEDKEDATP) the composition is skewed to basic and acidic residues. Residues 278 to 289 (ARRKAPARHAAA) show a composition bias toward basic residues. Residues 290 to 310 (RKQPAAKRAATPPAKRASTAA) are compositionally biased toward low complexity.

Belongs to the prokaryotic Ku family. As to quaternary structure, homodimer. Interacts with LigD.

With LigD forms a non-homologous end joining (NHEJ) DNA repair enzyme, which repairs dsDNA breaks with reduced fidelity. Binds linear dsDNA with 5'- and 3'- overhangs but not closed circular dsDNA nor ssDNA. Recruits and stimulates the ligase activity of LigD. In Cupriavidus necator (strain ATCC 17699 / DSM 428 / KCTC 22496 / NCIMB 10442 / H16 / Stanier 337) (Ralstonia eutropha), this protein is Non-homologous end joining protein Ku.